The following is a 330-amino-acid chain: Fructose-1,6-bisphosphatase class 1 (330 aa).

The Mg(2+) site is built by glutamate 78, aspartate 97, leucine 99, and aspartate 100. Residues 100 to 103 (DGSS) and asparagine 188 each bind substrate. Residue glutamate 260 coordinates Mg(2+).

This sequence belongs to the FBPase class 1 family. In terms of assembly, homotetramer. Mg(2+) serves as cofactor.

The protein localises to the cytoplasm. The catalysed reaction is beta-D-fructose 1,6-bisphosphate + H2O = beta-D-fructose 6-phosphate + phosphate. It participates in carbohydrate biosynthesis; gluconeogenesis. This chain is Fructose-1,6-bisphosphatase class 1, found in Paracoccus denitrificans (strain Pd 1222).